Reading from the N-terminus, the 693-residue chain is Protein-glutamine gamma-glutamyltransferase E (693 aa).

Tyr-111 carries the post-translational modification Phosphotyrosine. Thr-112 carries the phosphothreonine modification. Residues Ala-222, Asn-225, Asn-227, and Asp-228 each contribute to the Ca(2+) site. Cys-273 is an active-site residue. Residues Asp-302, Asp-304, Asn-306, Ser-308, and Asp-325 each coordinate Ca(2+). Catalysis depends on residues His-331 and Asp-354. Residues Asn-394, Thr-416, Glu-444, and Glu-449 each coordinate Ca(2+). Positions 455–482 (KAMNKLKPNASFGATSSRGPQGEEKEPS) are disordered.

This sequence belongs to the transglutaminase superfamily. Transglutaminase family. In terms of assembly, consists of two polypeptide chains, which are synthesized as a precursor form of a single polypeptide. The cofactor is Ca(2+). In terms of processing, activated by proteolytic processing. In vitro activation is commonly achieved by cleavage with dispase, a neutral bacterial protease. Physiological activation may be catalyzed by CTSL and, to a lesser extent, by CTSS.

The protein resides in the cytoplasm. The catalysed reaction is L-glutaminyl-[protein] + L-lysyl-[protein] = [protein]-L-lysyl-N(6)-5-L-glutamyl-[protein] + NH4(+). In terms of biological role, catalyzes the calcium-dependent formation of isopeptide cross-links between glutamine and lysine residues in various proteins, as well as the conjugation of polyamines to proteins. Involved in the formation of the cornified envelope (CE), a specialized component consisting of covalent cross-links of proteins beneath the plasma membrane of terminally differentiated keratinocytes. Catalyzes small proline-rich proteins and LOR cross-linking to form small interchain oligomers, which are further cross-linked by TGM1 onto the growing CE scaffold. In hair follicles, involved in cross-linking structural proteins to hardening the inner root sheath. This chain is Protein-glutamine gamma-glutamyltransferase E (Tgm3), found in Rattus norvegicus (Rat).